A 153-amino-acid chain; its full sequence is Large ribosomal subunit protein bL9 (153 aa).

It belongs to the bacterial ribosomal protein bL9 family.

Its function is as follows. Binds to the 23S rRNA. This Micrococcus luteus (strain ATCC 4698 / DSM 20030 / JCM 1464 / CCM 169 / CCUG 5858 / IAM 1056 / NBRC 3333 / NCIMB 9278 / NCTC 2665 / VKM Ac-2230) (Micrococcus lysodeikticus) protein is Large ribosomal subunit protein bL9.